Reading from the N-terminus, the 293-residue chain is Ribosomal protein L11 methyltransferase (293 aa).

S-adenosyl-L-methionine is bound by residues threonine 145, glycine 166, aspartate 188, and asparagine 230.

Belongs to the methyltransferase superfamily. PrmA family.

The protein resides in the cytoplasm. It carries out the reaction L-lysyl-[protein] + 3 S-adenosyl-L-methionine = N(6),N(6),N(6)-trimethyl-L-lysyl-[protein] + 3 S-adenosyl-L-homocysteine + 3 H(+). Its function is as follows. Methylates ribosomal protein L11. This Shewanella baltica (strain OS223) protein is Ribosomal protein L11 methyltransferase.